Here is a 1091-residue protein sequence, read N- to C-terminus: LRR receptor-like serine/threonine-protein kinase RGI3 (1091 aa).

The N-terminal stretch at 1–24 (MPPNIYRLSFFSSLLCFFFIPCFS) is a signal peptide. Topologically, residues 25 to 703 (LDQQGQALLS…TTRNSSVVRL (679 aa)) are extracellular. An LRR 1 repeat occupies 33–56 (LSWKSQLNISGDAFSSWHVADTSP). N-linked (GlcNAc...) asparagine glycosylation is present at Asn40. Cys57 and Cys64 form a disulfide bridge. LRR repeat units follow at residues 67–91 (RGEVSEIQLKGMDLQGSLPVTSLRS), 92–115 (LKSLTSLTLSSLNLTGVIPKEIGD), 116–140 (FTELELLDLSDNSLSGDIPVEIFRL), 142–166 (KLKTLSLNTNNLEGHIPMEIGNLSG), 168–188 (VELMLFDNKLSGEIPRSIGEL), 190–213 (NLQVLRAGGNKNLRGELPWEIGNC), 214–237 (ENLVMLGLAETSLSGKLPASIGNL), 239–261 (RVQTIAIYTSLLSGPIPDEIGYC), 262–285 (TELQNLYLYQNSISGSIPTTIGGL), 287–309 (KLQSLLLWQNNLVGKIPTELGNC), 311–332 (ELWLIDFSENLLTGTIPRSFGK), 333–357 (LENLQELQLSVNQISGTIPEELTNC), 359–383 (KLTHLEIDNNLITGEIPSLMSNLRS), 385–405 (TMFFAWQNKLTGNIPQSLSQC), 406–429 (RELQAIDLSYNSLSGSIPKEIFGL), 431–453 (NLTKLLLLSNDLSGFIPPDIGNC), 454–477 (TNLYRLRLNGNRLAGSIPSEIGNL), 478–501 (KNLNFVDISENRLVGSIPPAISGC), 503–524 (SLEFLDLHTNSLSGSLLGTTLP), 525–548 (KSLKFIDFSDNALSSTLPPGIGLL), 549–572 (TELTKLNLAKNRLSGEIPREISTC), 574–596 (SLQLLNLGENDFSGEIPDELGQI), 598–620 (SLAISLNLSCNRFVGEIPSRFSD), 621–644 (LKNLGVLDVSHNQLTGNLNVLTDL), 645–668 (QNLVSLNISYNDFSGDLPNTPFFR), and 669–690 (RLPLSDLASNRGLYISNAISTR). N-linked (GlcNAc...) asparagine glycosylation occurs at Asn104. N-linked (GlcNAc...) asparagine glycosylation is present at Asn163. 5 short sequence motifs (small peptide recognition) span residues 173–174 (FD), 195–198 (RAGG), 218–223 (MLGLAE), Tyr246, and 268–270 (YLY). 2 short sequence motifs (small peptide recognition) span residues 316 to 319 (DFSE) and 338 to 340 (ELQ). An N-linked (GlcNAc...) asparagine glycan is attached at Asn356. Short sequence motifs (small peptide recognition) lie at residues 386 to 390 (MFFAW) and 412 to 415 (DLSY). The N-linked (GlcNAc...) asparagine glycan is linked to Asn431. The Small peptide recognition motif lies at 434-438 (KLLLL). Residue Asn452 is glycosylated (N-linked (GlcNAc...) asparagine). The short motif at 458-460 (RLR) is the Small peptide recognition element. N-linked (GlcNAc...) asparagine glycosylation is present at Asn604. Asn651 carries an N-linked (GlcNAc...) asparagine glycan. Residue Asn697 is glycosylated (N-linked (GlcNAc...) asparagine). A helical membrane pass occupies residues 704–724 (TILILVVVTAVLVLMAVYTLV). Residues 725 to 1091 (RARAAGKQLL…CSFAFSDDSV (367 aa)) are Cytoplasmic-facing. Positions 760–1046 (LTSANVIGTG…MLTEIRHIDV (287 aa)) constitute a Protein kinase domain. Residues 766–774 (IGTGSSGVV) and Lys788 each bind ATP. A phosphotyrosine mark is found at Tyr831 and Tyr870. The active-site Proton acceptor is the Asp883. Tyr933 is modified (phosphotyrosine).

Belongs to the protein kinase superfamily. Ser/Thr protein kinase family. As to quaternary structure, binds to RGF peptides such as RGF1, GLV5/CLEL1/RGF2, GLV7/CLEL3/RGF3, GLV3/RGF4, GLV10/CLEL7/RGF5 and RGF10/CLELN; these interactions trigger the formation of heterodimers with SERK1, SERK2 or BAK1/SERK3 via LRR regions. Phosphorylated and ubiquitinated upon interaction with RGF1, thus leading to activation a subsequent degradation. In terms of processing, autophosphorylated. In terms of tissue distribution, expressed in roots.

The protein resides in the cell membrane. The catalysed reaction is L-seryl-[protein] + ATP = O-phospho-L-seryl-[protein] + ADP + H(+). The enzyme catalyses L-threonyl-[protein] + ATP = O-phospho-L-threonyl-[protein] + ADP + H(+). In terms of biological role, together with RGI1, RGI2, RGI4 and RGI5, acts as a receptor of RGF peptides (e.g. RGF1, GLV5/CLEL1/RGF2, GLV7/CLEL3/RGF3, GLV3/RGF4, GLV10/CLEL7/RGF5 and RGF10/CLELN), peptide hormones which maintain the postembryonic root stem cell niche by regulating the expression levels and patterns of the transcription factor PLETHORA (PLT, e.g. PLT1 and PLT2). Links RGF peptides signal with their downstream components. The polypeptide is LRR receptor-like serine/threonine-protein kinase RGI3 (Arabidopsis thaliana (Mouse-ear cress)).